The sequence spans 999 residues: Cytoplasmic dynein 2 intermediate chain 1 (999 aa).

Basic and acidic residues-rich tracts occupy residues 1–19 (MEPGKRRTKDDTWKADDLR), 29–138 (PKEE…EEIR), 146–260 (LLSR…EDRH), and 268–300 (GLHYDDERRRSHADKKERSSKEEHKKRELKELE). A disordered region spans residues 1 to 350 (MEPGKRRTKD…EHEAREKAEE (350 aa)). The residue at position 250 (Ser250) is a Phosphoserine. Residues 318-338 (LEDDFVDYEDDFEVCDGDDDS) show a composition bias toward acidic residues. The segment covering 339-350 (NNEHEAREKAEE) has biased composition (basic and acidic residues). The tract at residues 416-495 (ASHRQKSRSQ…DIQTEDIETR (80 aa)) is binding to the DYNLT2B-DYNLT1/DYNLT3 dimer. WD repeat units follow at residues 637 to 677 (ICES…RIHH), 718 to 764 (AYKK…KADI), 850 to 890 (VRPI…PIMQ), and 895 to 935 (TSGH…LGPV).

Belongs to the dynein light intermediate chain family. As to quaternary structure, intermediate chain of the cytoplasmic dynein complex 2, a multisubunit complex, composed at least of eleven different proteins. The cytoplasmic dynein 2 complex consists of two catalytic heavy chains (HCs) and a number of non-catalytic subunits presented by intermediate chains (ICs), light intermediate chains (LICs) and light chains (LCs). Among them, a heavy chain (DYNC2H1), two intermediate chains (DYNC2I2 and DYNC2I1), a light intermediate chain (DYNC2LI1), and a light chain (DYNLT2B) are unique to the cytoplasmic dynein complex 2, but a subset of the light chains are also shared by dynein-1 and dynein-2 complexes. Interacts with DYNC2I2; their C-terminal domains each bind a copy of the heavy chain, and their extended N-terminal regions are held together by an array of light chain dimers. Interacts with DYNLT2B. Interacts (via the N-terminal half) with DYNLT2B-DYNLT1 dimer or with DYNLT2B-DYNLT3 dimer; this interaction is crucial for retrograde trafficking of ciliary proteins.

The protein resides in the cell projection. The protein localises to the cilium. Its subcellular location is the cytoplasm. It localises to the cytoskeleton. It is found in the microtubule organizing center. The protein resides in the centrosome. Acts as one of several non-catalytic accessory components of the cytoplasmic dynein 2 complex (dynein-2 complex), a motor protein complex that drives the movement of cargos along microtubules within cilia and flagella in concert with the intraflagellar transport (IFT) system. DYNC2I1 plays a major role in retrograde ciliary protein trafficking in cilia and flagella. Also requires to maintain a functional transition zone. This Mus musculus (Mouse) protein is Cytoplasmic dynein 2 intermediate chain 1 (Dync2i1).